Reading from the N-terminus, the 859-residue chain is MSGSTAVALLFCVLSCSVWGAGSKASHEHNAAAAAQDVTLKVQVSDVSTHQPIADAVIEIFANQVSAASGTTGADGTALVKLQYKLGSQLIVTATKQAYVPNSAPWRPLRLPVFSSLSLGLLPERSATLMVYDDIVQIVSGFQGSRLQPRVHFQRRALNLPGNATYKDLAAFLTAASTPWEIDSFPYLQGSDGNSTGNNSRFDLTPVTAVSFHLLNSDGTDIPVNGPIYVTVPLPTHSSLKHNAHVPAWRFDQKHGTWLKSSIGIIQQEGSQLTWTYIAPQMGYWVAAMSPSHPDPVVTQDITSYHTIFLLAILGGIAFILLVLLCILLYYCRRKCLKPRQHHRKLQLSTALDCSKKDQATSMSHINLISPIHMEMLSSSGEADMHTPMLKPSYNTSRDFGSREELLSHQEEKSRMSLDNLTPSGTLRQVYNKSLDHILMKSRKSAEISEEYTSTMKDEYRRSYNSVICQPLFESKDKDLLSSTNHVTAGSKPNIQEQMHPVPSAPEPEQLIDRRSNECMMSRSVDHLERPTSFSRPGQLICYNSVDQVNDSVYRNVLPTLVIPAHYVKLPGEHPFVSQQLIVSAEQQFEIERLQAELSHAQQMQPPPLSAQAISQQHLQDGEGVEWSTQNAMMSESVSIPASLNDAAIAQMNGEVQLLTEKALMELGGGRPMPHPRAWFVSLDGRSNAHIRHSYIDLQRAGKNGSNDASLDSGVDMNEPKLGRKLRGEKLSMLHSSMQHPTLQEHQQLNQVNVSDSTAYTQLVYLEDMDQSPSECGTAVCSPEDSRPFIEAPAKKSGSQTPSLQEETIKRTTESSPLPLSSPEHEFNINDDSGEDQGENKKSPWQKREERPLLAFNKK.

The first 20 residues, 1-20 (MSGSTAVALLFCVLSCSVWG), serve as a signal peptide directing secretion. The Extracellular portion of the chain corresponds to 21–307 (AGSKASHEHN…VTQDITSYHT (287 aa)). Residues asparagine 163, asparagine 194, and asparagine 198 are each glycosylated (N-linked (GlcNAc...) asparagine). The chain crosses the membrane as a helical span at residues 308-328 (IFLLAILGGIAFILLVLLCIL). Over 329 to 859 (LYYCRRKCLK…ERPLLAFNKK (531 aa)) the chain is Cytoplasmic. Disordered regions lie at residues 397–421 (SRDF…LDNL), 484–509 (TNHV…PEPE), and 771–859 (QSPS…FNKK). Residues 400 to 416 (FGSREELLSHQEEKSRM) show a composition bias toward basic and acidic residues. 2 stretches are compositionally biased toward polar residues: residues 484 to 497 (TNHV…NIQE) and 797 to 806 (SGSQTPSLQE). A compositionally biased stretch (basic and acidic residues) spans 838 to 852 (GENKKSPWQKREERP).

Belongs to the FAM171 family.

It localises to the cell membrane. Functionally, may be involved in the regulation of the cytoskeletal dynamics, plays a role in actin stress fiber formation. This chain is Protein FAM171A1 (fam171a1), found in Xenopus laevis (African clawed frog).